We begin with the raw amino-acid sequence, 636 residues long: MVKFLVIFWFVVISFSHVSAQVCLERSGFFTPNSTYDLNRRVLLSSLPLNVTAIDGFYTTWIGEHPNRAYGLGMCVPGTDAHSCSDCIILANARLLQNCTNQTEAIVWRIDRTVCLVRYSNRSFYSSLGMEILRSDNYTRDFQANLTDLEITWEALMIRMIDQASYLYYAAGIRKLETSISRIYGFVQCSRDLSLQNCTKCLQQNVVEYRSCCRGRQGGIILRPSCFIRWELYPFLGLFDNIRPRQKDGKSISTGAIVAIIVVPILLLALGVGLWKRRKAYKTKTTKIADDITTSGSLQFEFKAIEAATCNFHNVNKLGHGGFGEVYKGTFPNGTEVAVKRLSKTSGQGEEEFKNEVFLVAKLQHRNLVKLLGYAVKGDEKILVYEFLPNKSLDHFLFDPVKKGQLDWTRRYNIINGITRGIVYLHQDSRLTIIHRDLKAGNILLDADMNPKIVDFGVARNFRVDQTEATTARVVGTIGYMPPEYVTNGQFSTKSDVYSFGVLILEIIGGKKNSSINETDGSISNLVTYVWRLWNNEPLLELVDAPMGENYDRNEVIRCIHIGLLCVQENPADRPTMSTVFHMLTNTSITLHVPQPPGFVFRVRFKPNPLADRLQRGPSTSMSFSCSVSVTCVSPR.

The signal sequence occupies residues 1 to 20; it reads MVKFLVIFWFVVISFSHVSA. Gnk2-homologous domains are found at residues 21 to 124 and 130 to 235; these read QVCL…NRSF and MEIL…LYPF. Topologically, residues 21 to 254 are extracellular; it reads QVCLERSGFF…RQKDGKSIST (234 aa). N-linked (GlcNAc...) asparagine glycans are attached at residues asparagine 33, asparagine 50, asparagine 98, asparagine 101, asparagine 121, asparagine 137, asparagine 145, and asparagine 197. A helical membrane pass occupies residues 255–275; that stretch reads GAIVAIIVVPILLLALGVGLW. Over 276–636 the chain is Cytoplasmic; it reads KRRKAYKTKT…SVSVTCVSPR (361 aa). In terms of domain architecture, Protein kinase spans 312–585; that stretch reads FHNVNKLGHG…TMSTVFHMLT (274 aa). ATP contacts are provided by residues 318–326 and lysine 340; that span reads LGHGGFGEV. Catalysis depends on aspartate 437, which acts as the Proton acceptor.

Belongs to the protein kinase superfamily. Ser/Thr protein kinase family. CRK subfamily.

The protein localises to the membrane. The enzyme catalyses L-seryl-[protein] + ATP = O-phospho-L-seryl-[protein] + ADP + H(+). The catalysed reaction is L-threonyl-[protein] + ATP = O-phospho-L-threonyl-[protein] + ADP + H(+). The sequence is that of Cysteine-rich receptor-like protein kinase 24 (CRK24) from Arabidopsis thaliana (Mouse-ear cress).